The primary structure comprises 970 residues: GEM-interacting protein (970 aa).

Phosphoserine is present on serine 19. Disordered regions lie at residues 44 to 76, 224 to 263, and 377 to 478; these read PLLS…EGPV, SEDL…AQAK, and PLDI…ENGL. Residues 56 to 65 show a composition bias toward polar residues; sequence PTATVTNEAS. Phosphoserine occurs at positions 71, 231, 234, 243, 437, and 441. Residues 81–344 form the F-BAR domain; the sequence is EELDLRLIRT…CCAPFEPGQR (264 aa). A compositionally biased stretch (polar residues) spans 231-246; that stretch reads SQGSPEDSAPQASPGP. Positions 459–472 are enriched in acidic residues; the sequence is SSDDFEERDPDLGD. A Phorbol-ester/DAG-type zinc finger spans residues 493 to 537; the sequence is THQLRRLRGPAKCRECEAFMVSGTECEECFLTCHKRCLETLLILC. The Rho-GAP domain occupies 554-757; sequence LQLPRDFPEE…FLIVHYEQIF (204 aa). A Phosphothreonine modification is found at threonine 660. The segment at 762–878 is disordered; that stretch reads LPQATEPPPQ…PVKYPRGGVR (117 aa). Residues 766–778 show a composition bias toward pro residues; the sequence is TEPPPQDSSPAPG. Positions 815–830 are enriched in polar residues; sequence EQHPTATPTEIPTPQS. A compositionally biased stretch (basic and acidic residues) spans 831-844; that stretch reads DQREDVAEDTKDGG. Over residues 847-863 the composition is skewed to polar residues; that stretch reads VSSQGPEDSLLGTQSRG. Phosphoserine occurs at positions 885, 907, 914, 919, and 923. Positions 897-932 are disordered; sequence ETPITSVPRGSLRGRGPSPAAASPEGSPLRRTPLPK. Over residues 910 to 923 the composition is skewed to low complexity; sequence GRGPSPAAASPEGS.

As to quaternary structure, interacts with GEM through its N-terminal.

Its function is as follows. Stimulates, in vitro and in vivo, the GTPase activity of RhoA. The protein is GEM-interacting protein (GMIP) of Homo sapiens (Human).